We begin with the raw amino-acid sequence, 100 residues long: NADH-quinone oxidoreductase subunit K 2 (100 aa).

Transmembrane regions (helical) follow at residues 2 to 22 (LAIENYLILSAILFAIGTIGV), 29 to 49 (IVIFMCIELMLNAVNLTFIAF), and 61 to 81 (FVFFVMTVAAAEAAVGLALMI).

It belongs to the complex I subunit 4L family. NDH-1 is composed of 14 different subunits. Subunits NuoA, H, J, K, L, M, N constitute the membrane sector of the complex.

It localises to the cell inner membrane. The catalysed reaction is a quinone + NADH + 5 H(+)(in) = a quinol + NAD(+) + 4 H(+)(out). Its function is as follows. NDH-1 shuttles electrons from NADH, via FMN and iron-sulfur (Fe-S) centers, to quinones in the respiratory chain. The immediate electron acceptor for the enzyme in this species is believed to be ubiquinone. Couples the redox reaction to proton translocation (for every two electrons transferred, four hydrogen ions are translocated across the cytoplasmic membrane), and thus conserves the redox energy in a proton gradient. This is NADH-quinone oxidoreductase subunit K 2 from Geobacter sp. (strain M21).